A 350-amino-acid polypeptide reads, in one-letter code: MPVLHNRISNDELKAKMLAESEPRTTISFYKYFTIASPQQTRDALYQVFTALDVFGRVYLAHEGINAQISVPQSKLETFRQQLYTFDPALDGVRLNIALEDDGKSFWVLRMKVRDRIVADGIDDPTFDASNVGDYLKAADVNAMLDDPDAVFIDMRNHYEYEVGHFENALEIPADTFREQLPKAVEMLREHADKKIVMYCTGGIRCEKASAWMKHNGFNKVWHIEGGIIEYARRARAQGLPVRFIGKNFVFDERMGERISDEVIAHCHQCGASCDSHTNCKNDGCHLLFIQCPQCASKFNGCCSEQCCEELALPEEEQRRRRAGRENGNKIFNKSRGRLNSKLSIPDPAE.

A Rhodanese domain is found at 146-240; the sequence is DDPDAVFIDM…YARRARAQGL (95 aa). The active-site Cysteine persulfide intermediate is the C200. Basic and acidic residues predominate over residues 319–328; it reads RRRRAGRENG. The disordered stretch occupies residues 319–350; that stretch reads RRRRAGRENGNKIFNKSRGRLNSKLSIPDPAE.

This sequence belongs to the TrhO family.

It catalyses the reaction uridine(34) in tRNA + AH2 + O2 = 5-hydroxyuridine(34) in tRNA + A + H2O. Functionally, catalyzes oxygen-dependent 5-hydroxyuridine (ho5U) modification at position 34 in tRNAs. This chain is tRNA uridine(34) hydroxylase, found in Salmonella typhimurium (strain LT2 / SGSC1412 / ATCC 700720).